Here is a 1366-residue protein sequence, read N- to C-terminus: ABC multidrug transporter MDR2 (1366 aa).

Residues 52–72 (IALIVIGTIAGIGAGIPFPLL) form a helical membrane-spanning segment. The ABC transmembrane type-1 1 domain maps to 56–354 (VIGTIAGIGA…MAPFMHIFAS (299 aa)). N-linked (GlcNAc...) asparagine glycosylation is present at N84. 5 helical membrane-spanning segments follow: residues 106 to 126 (VLQV…HTGC), 180 to 200 (KVGL…VAFL), 202 to 222 (VATI…MAFG), 288 to 308 (IQFG…FWQG), and 323 to 343 (VSVG…FVLS). The ABC transporter 1 domain maps to 390 to 669 (IELQDVTFNY…DGVYAGMVRL (280 aa)). 425–432 (GTSGSGKS) contributes to the ATP binding site. N-linked (GlcNAc...) asparagine glycosylation occurs at N620. The segment at 727–746 (PEEADSLPTEPEAKKEKPKQ) is disordered. Transmembrane regions (helical) follow at residues 768–788 (LGLI…VIFG), 807–827 (GMLF…AVIV), 868–888 (LLVA…GTTI), and 898–918 (LFAG…VLLA). The ABC transmembrane type-1 2 domain maps to 768 to 1055 (LGLITSIMIG…MFALVPDISK (288 aa)). N-linked (GlcNAc...) asparagine glycosylation occurs at N976. 2 helical membrane passes run 995–1015 (FWLS…YWWG) and 1019–1039 (ILAG…LLFS). The region spanning 1122-1361 (VQFRNVHFRY…CESYRANVIH (240 aa)) is the ABC transporter 2 domain. Residue 1157–1164 (GPSGSGKS) participates in ATP binding.

It belongs to the ABC transporter superfamily. ABCB family. Multidrug resistance exporter (TC 3.A.1.201) subfamily.

Its subcellular location is the cell membrane. Its function is as follows. Pleiotropic ABC efflux transporter that may be involved in the modulation susceptibility to a wide range of unrelated cytotoxic compounds. Does not act as an efflux pump for azoles, including fluconazole, itraconazole, ketoconazole, miconazole and voriconazole, nor does it modulate susceptibility to cycloheximide. This Trichophyton rubrum (strain ATCC MYA-4607 / CBS 118892) (Athlete's foot fungus) protein is ABC multidrug transporter MDR2.